The chain runs to 754 residues: MSGTNLDGNDEFDEQLRMQELYGDGKDGDTQTDAGGEPDSLGQQPTDTPYEWDLDKKAWFPKITEDFIATYQANYGFSNDGASSSTANVEDVHARTAEEPPQEKAPEPTDPRKKGEKRKAESGWFHVEEDRNTNVYVSGLPPDITVDEFIQLMSKFGIIMRDPQTEEFKVKLYKDNQGNLKGDGLCCYLKRESVELALKLLDEDEIRGYKLHVEVAKFQLKGEYDASKKKKKCKDYKKKLSMQQKQLDWRPERRAGPSRMRHERVVIIKNMFHPMDFEDDPLVLNEIREDLRVECSKFGQIRKLLLFDRHPDGVASVSFRDPEEADYCIQTLDGRWFGGRQITAQAWDGTTDYQVEETSREREERLRGWEAFLNAPEANRGLRRSDSVSASERAGPSRARHFSEHPSTSKMNAQETATGMAFEEPIDEKKFEKTEDGGEFEEGASENNAKESSPEKEAEEGCPGKESEEGCPKRGFEGSCSQKESEEGNPLRGSEEGSPKKESKKKTLRNDCEENGFAKESEDDPNKESEEEVGPTKESEEDDSEKESDEDCSEKQSEDGSEREFEENGLEKDLDEEGSEKELHENVLDKELEENDSENSEFEDDGSEKVLDEEGSEREFDEDSDEKEEEEDTYEKVFDDESNEKEDEEYADEKGLEAADKKEEEGDADEKLFEESDDKEDEDADGKEVEDADEKLFEDDDSNEKLFDEEEDSNEKLFDDSDERGTLGGFGSVEEGPLSTGSSFILSSDDDDDI.

Disordered stretches follow at residues 1–53 (MSGT…YEWD) and 81–122 (GASS…KAES). An N-acetylserine modification is found at S2. Basic and acidic residues predominate over residues 90 to 122 (EDVHARTAEEPPQEKAPEPTDPRKKGEKRKAES). RRM domains follow at residues 133 to 218 (TNVY…VAKF) and 264 to 349 (RVVI…AWDG). The interval 259 to 353 (RMRHERVVII…AQAWDGTTDY (95 aa)) is U2AF homology motif (UHM). K297 is subject to N6-acetyllysine. The segment at 380–415 (RGLRRSDSVSASERAGPSRARHFSEHPSTSKMNAQE) is disordered. A mediates interaction with the P-TEFb complex region spans residues 381–754 (GLRRSDSVSA…ILSSDDDDDI (374 aa)). A phosphoserine mark is found at S387, S403, S407, and S409. The segment covering 405 to 415 (HPSTSKMNAQE) has biased composition (polar residues). Glycyl lysine isopeptide (Lys-Gly) (interchain with G-Cter in SUMO2) cross-links involve residues K429 and K430. The disordered stretch occupies residues 433–754 (KTEDGGEFEE…ILSSDDDDDI (322 aa)). A phosphoserine mark is found at S445, S452, and S453. Positions 462–476 (CPGKESEEGCPKRGF) are enriched in basic and acidic residues. 6 positions are modified to phosphoserine: S481, S485, S494, S498, S521, and S529. Positions 508–538 (LRNDCEENGFAKESEDDPNKESEEEVGPTKE) are enriched in basic and acidic residues. The segment covering 539-552 (SEEDDSEKESDEDC) has biased composition (acidic residues). Over residues 553 to 563 (SEKQSEDGSER) the composition is skewed to basic and acidic residues. 3 positions are modified to phosphoserine: S557, S561, and S579. Positions 564-579 (EFEENGLEKDLDEEGS) are enriched in acidic residues. The span at 580 to 590 (EKELHENVLDK) shows a compositional bias: basic and acidic residues. Residues 591 to 606 (ELEENDSENSEFEDDG) show a composition bias toward acidic residues. Phosphoserine occurs at positions 597, 600, 607, 616, and 624. Composition is skewed to acidic residues over residues 613–633 (EEGSEREFDEDSDEKEEEEDT) and 640–651 (DESNEKEDEEYA). T633 bears the Phosphothreonine mark. Phosphoserine is present on S642. Basic and acidic residues predominate over residues 652-674 (DEKGLEAADKKEEEGDADEKLFE). The span at 675–713 (ESDDKEDEDADGKEVEDADEKLFEDDDSNEKLFDEEEDS) shows a compositional bias: acidic residues. Phosphoserine occurs at positions 676, 702, 713, 721, and 748. The segment covering 714–725 (NEKLFDDSDERG) has biased composition (basic and acidic residues).

This sequence belongs to the HTATSF1 family. As to quaternary structure, component of the 17S U2 SnRNP complex, a ribonucleoprotein complex that contains small nuclear RNA (snRNA) U2 and a number of specific proteins. Within the 17S U2 SnRNP complex, interacts (via UHM region) directly with SF3B1. Component of a complex which is at least composed of HTATSF1/Tat-SF1, the P-TEFb complex components CDK9 and CCNT1, RNA polymerase II, SUPT5H, and NCL/nucleolin. Interacts with GTF2F2/RAP30 and POLR2A. Interacts with TCERG1/CA150. Interacts with (poly-ADP-ribosylated) RPA1; promoting HTATSF1 recruitment to DNA damage sites. Interacts (when phosphorylated) with TOPBP1; promoting recruitment of TOPBP1 to DNA damage sites during S-phase. In terms of processing, phosphorylation at Ser-748 by CK2 during S-phase in response to DNA damage promotes interaction with TOPBP1 and double-strand break (DSB) repair via homologous recombination.

The protein localises to the nucleus. The protein resides in the chromosome. Component of the 17S U2 SnRNP complex of the spliceosome, a large ribonucleoprotein complex that removes introns from transcribed pre-mRNAs. The 17S U2 SnRNP complex (1) directly participates in early spliceosome assembly and (2) mediates recognition of the intron branch site during pre-mRNA splicing by promoting the selection of the pre-mRNA branch-site adenosine, the nucleophile for the first step of splicing. Within the 17S U2 SnRNP complex, HTATSF1 is required to stabilize the branchpoint-interacting stem loop. HTATSF1 is displaced from the 17S U2 SnRNP complex before the stable addition of the 17S U2 SnRNP complex to the spliceosome, destabilizing the branchpoint-interacting stem loop and allowing to probe intron branch site sequences. Also acts as a regulator of transcriptional elongation, possibly by mediating the reciprocal stimulatory effect of splicing on transcriptional elongation. Involved in double-strand break (DSB) repair via homologous recombination in S-phase by promoting the recruitment of TOPBP1 to DNA damage sites. Mechanistically, HTATSF1 is (1) recruited to DNA damage sites in S-phase via interaction with poly-ADP-ribosylated RPA1 and (2) phosphorylated by CK2, promoting recruitment of TOPBP1, thereby facilitating RAD51 nucleofilaments formation and RPA displacement, followed by homologous recombination. The chain is 17S U2 SnRNP complex component HTATSF1 (HTATSF1) from Pongo abelii (Sumatran orangutan).